A 389-amino-acid chain; its full sequence is Acetate kinase (389 aa).

Residue asparagine 7 participates in Mg(2+) binding. Residue lysine 14 participates in ATP binding. Arginine 88 contacts substrate. Aspartate 145 functions as the Proton donor/acceptor in the catalytic mechanism. Residues 205-209, 279-281, and 324-328 contribute to the ATP site; these read HLGNG, DLR, and GIGEN. Glutamate 375 contributes to the Mg(2+) binding site.

The protein belongs to the acetokinase family. As to quaternary structure, homodimer. It depends on Mg(2+) as a cofactor. Requires Mn(2+) as cofactor.

It localises to the cytoplasm. It catalyses the reaction acetate + ATP = acetyl phosphate + ADP. The protein operates within metabolic intermediate biosynthesis; acetyl-CoA biosynthesis; acetyl-CoA from acetate: step 1/2. In terms of biological role, catalyzes the formation of acetyl phosphate from acetate and ATP. Can also catalyze the reverse reaction. The polypeptide is Acetate kinase (Sulfurimonas denitrificans (strain ATCC 33889 / DSM 1251) (Thiomicrospira denitrificans (strain ATCC 33889 / DSM 1251))).